The following is a 246-amino-acid chain: Bis(5'-nucleosyl)-tetraphosphatase PrpE [asymmetrical] (246 aa).

It belongs to the PrpE family. The cofactor is Ni(2+).

The enzyme catalyses P(1),P(4)-bis(5'-guanosyl) tetraphosphate + H2O = GMP + GTP + 2 H(+). Functionally, asymmetrically hydrolyzes Ap4p to yield AMP and ATP. The sequence is that of Bis(5'-nucleosyl)-tetraphosphatase PrpE [asymmetrical] from Bacillus cereus (strain 03BB102).